Here is a 388-residue protein sequence, read N- to C-terminus: Single-stranded DNA-binding protein 3 (388 aa).

Methionine 1 bears the N-acetylmethionine mark. Residues 16-48 (AREKLALYVYEYLLHVGAQKSAQTFLSEIRWEK) enclose the LisH domain. The segment at 101–388 (VLGNIPPNDG…NYSPSMTMSV (288 aa)) is disordered. The span at 126 to 139 (GSQPSPHAQPPPHN) shows a compositional bias: pro residues. An asymmetric dimethylarginine mark is found at arginine 155, arginine 161, and arginine 165. Composition is skewed to low complexity over residues 200–209 (MQRMNPPRGM) and 250–268 (PNSA…TYVG). Positions 272–282 (GGGPPGTPIMP) are enriched in pro residues. Residues 285–296 (ADSTNSSDNIYT) show a composition bias toward polar residues. Residues 315-325 (GSDGPMGGMGG) show a composition bias toward gly residues. Residues 346-357 (NSPNNISGISNP) show a composition bias toward low complexity. 3 positions are modified to phosphoserine: serine 347, serine 352, and serine 355. Threonine 360 bears the Phosphothreonine mark. Residues 373 to 388 (HSFQNDNYSPSMTMSV) are compositionally biased toward polar residues. Phosphoserine occurs at positions 381 and 387.

Highly expressed in all hematopoietic tissues, including spleen, lymph node, peripheral blood, bone marrow, thymus, and fetal liver, with highest expression in thymus and fetal liver. Expression is also high in heart, brain, kidney, and skeletal muscle.

The protein resides in the nucleus. In terms of biological role, may be involved in transcription regulation of the alpha 2(I) collagen gene where it binds to the single-stranded polypyrimidine sequences in the promoter region. The protein is Single-stranded DNA-binding protein 3 (SSBP3) of Homo sapiens (Human).